Reading from the N-terminus, the 547-residue chain is Serine/threonine-protein kinase pkn3 (547 aa).

In terms of domain architecture, Protein kinase spans 18 to 288 (YRVEALIGEG…EAFKAELQAV (271 aa)). ATP contacts are provided by residues 24 to 32 (IGEGGMGKV) and K47. The active-site Proton acceptor is D142. Over residues 290–299 (KERRRMDSAP) the composition is skewed to basic and acidic residues. Residues 290-327 (KERRRMDSAPRRSANSSAVLAPLPRKSAASPQSDVRDA) are disordered.

This sequence belongs to the protein kinase superfamily. Ser/Thr protein kinase family.

It carries out the reaction L-seryl-[protein] + ATP = O-phospho-L-seryl-[protein] + ADP + H(+). The enzyme catalyses L-threonyl-[protein] + ATP = O-phospho-L-threonyl-[protein] + ADP + H(+). The protein is Serine/threonine-protein kinase pkn3 (pkn3) of Myxococcus xanthus.